The chain runs to 350 residues: Lipoyl synthase (350 aa).

The tract at residues 1 to 39 (MSDTSSPKPVASGEKFRTAQGITAIKDGQKRRASAEPQV) is disordered. Positions 73, 78, 84, 99, 103, 106, and 314 each coordinate [4Fe-4S] cluster. Residues 85-303 (WSNGTATIML…RDIGLEKGFM (219 aa)) enclose the Radical SAM core domain.

Belongs to the radical SAM superfamily. Lipoyl synthase family. [4Fe-4S] cluster serves as cofactor.

It localises to the cytoplasm. The enzyme catalyses [[Fe-S] cluster scaffold protein carrying a second [4Fe-4S](2+) cluster] + N(6)-octanoyl-L-lysyl-[protein] + 2 oxidized [2Fe-2S]-[ferredoxin] + 2 S-adenosyl-L-methionine + 4 H(+) = [[Fe-S] cluster scaffold protein] + N(6)-[(R)-dihydrolipoyl]-L-lysyl-[protein] + 4 Fe(3+) + 2 hydrogen sulfide + 2 5'-deoxyadenosine + 2 L-methionine + 2 reduced [2Fe-2S]-[ferredoxin]. The protein operates within protein modification; protein lipoylation via endogenous pathway; protein N(6)-(lipoyl)lysine from octanoyl-[acyl-carrier-protein]: step 2/2. Its function is as follows. Catalyzes the radical-mediated insertion of two sulfur atoms into the C-6 and C-8 positions of the octanoyl moiety bound to the lipoyl domains of lipoate-dependent enzymes, thereby converting the octanoylated domains into lipoylated derivatives. This is Lipoyl synthase from Ectopseudomonas mendocina (strain ymp) (Pseudomonas mendocina).